A 367-amino-acid chain; its full sequence is DNA replication and repair protein RecF (367 aa).

Position 30-37 (30-37 (GANGSGKT)) interacts with ATP.

It belongs to the RecF family.

It localises to the cytoplasm. In terms of biological role, the RecF protein is involved in DNA metabolism; it is required for DNA replication and normal SOS inducibility. RecF binds preferentially to single-stranded, linear DNA. It also seems to bind ATP. This chain is DNA replication and repair protein RecF, found in Pseudomonas entomophila (strain L48).